A 389-amino-acid chain; its full sequence is MAAMMMRQKVAGAIAGERRSAVAPKMGRAATAPVVVASANASAFKGAAVTARVKASTRAARVQSRRTAVLTQAKIGDSLAEFLVEATPDPKLRHVMMSMAEATRTIAHKVRTASCAGTACVNSFGDEQLAVDMVADKLLFEALKYSHVCKLACSEEVPEPVDMGGEGFCVAFDPLDGSSSSDTNFAVGTIFGVWPGDKLTNITGREQVAAGMGIYGPRTVFCIALKDAPGCHEFLLMDDGKWMHVKETTHIGEGKMFAPGNLRATFDNPAYERLINFYLGEKYTLRYTGGIVPDLFQIIVKEKGVFTNLTSPTTKAKLRILFEVAPLALLIEKAGGASSCDGKAVSALDIPILVCDQRTQICYGSIGEVRRFEEYMYGTSPRFSEKVVA.

Cys115 and Cys120 form a disulfide bridge. Mg(2+)-binding residues include Asp126, Glu155, Asp173, Leu175, and Asp176. Residues 176–179 (DGSS), Tyr287, and Lys317 each bind substrate. Glu323 is a Mg(2+) binding site.

It belongs to the FBPase class 1 family. In terms of assembly, homodimer. Mg(2+) serves as cofactor.

The protein resides in the plastid. The protein localises to the chloroplast. The enzyme catalyses D-sedoheptulose 1,7-bisphosphate + H2O = D-sedoheptulose 7-phosphate + phosphate. Its pathway is carbohydrate biosynthesis; Calvin cycle. This Chlamydomonas reinhardtii (Chlamydomonas smithii) protein is Sedoheptulose-1,7-bisphosphatase, chloroplastic (CSBP).